A 187-amino-acid chain; its full sequence is UPF0301 protein YqgE (187 aa).

The protein belongs to the UPF0301 (AlgH) family.

The protein is UPF0301 protein YqgE of Escherichia coli O7:K1 (strain IAI39 / ExPEC).